The primary structure comprises 293 residues: Nitrogenase iron protein (293 aa).

10–17 (GKGGIGKS) contacts ATP. Residue Cys98 participates in [4Fe-4S] cluster binding. Arg101 carries the post-translational modification ADP-ribosylarginine; by dinitrogenase reductase ADP-ribosyltransferase. Residue Cys133 coordinates [4Fe-4S] cluster.

This sequence belongs to the NifH/BchL/ChlL family. As to quaternary structure, homodimer. The cofactor is [4Fe-4S] cluster. In terms of processing, the reversible ADP-ribosylation of Arg-101 inactivates the nitrogenase reductase and regulates nitrogenase activity.

It catalyses the reaction N2 + 8 reduced [2Fe-2S]-[ferredoxin] + 16 ATP + 16 H2O = H2 + 8 oxidized [2Fe-2S]-[ferredoxin] + 2 NH4(+) + 16 ADP + 16 phosphate + 6 H(+). Functionally, the key enzymatic reactions in nitrogen fixation are catalyzed by the nitrogenase complex, which has 2 components: the iron protein and the molybdenum-iron protein. The polypeptide is Nitrogenase iron protein (Pectobacterium atrosepticum (strain SCRI 1043 / ATCC BAA-672) (Erwinia carotovora subsp. atroseptica)).